Consider the following 360-residue polypeptide: Tryptophan--tRNA ligase, mitochondrial (360 aa).

A mitochondrion-targeting transit peptide spans 1–18; it reads MALHSMRKARERWSFIRA. ATP contacts are provided by residues glutamine 42 and 48–51; that span reads HLGN. L-tryptophan is bound at residue aspartate 167. Residues 179–181, valine 217, and 226–230 each bind ATP; these read GED and KMSKS.

The protein belongs to the class-I aminoacyl-tRNA synthetase family. Brain.

The protein localises to the mitochondrion matrix. Its subcellular location is the mitochondrion. It catalyses the reaction tRNA(Trp) + L-tryptophan + ATP = L-tryptophyl-tRNA(Trp) + AMP + diphosphate + H(+). Functionally, catalyzes the attachment of tryptophan to tRNA(Trp) in a two-step reaction: tryptophan is first activated by ATP to form Trp-AMP and then transferred to the acceptor end of tRNA(Trp). The chain is Tryptophan--tRNA ligase, mitochondrial (WARS2) from Homo sapiens (Human).